Reading from the N-terminus, the 253-residue chain is Ubiquinone/menaquinone biosynthesis C-methyltransferase UbiE (253 aa).

S-adenosyl-L-methionine is bound by residues Thr-76, Asp-97, and 125 to 126 (NA).

Belongs to the class I-like SAM-binding methyltransferase superfamily. MenG/UbiE family.

The enzyme catalyses a 2-demethylmenaquinol + S-adenosyl-L-methionine = a menaquinol + S-adenosyl-L-homocysteine + H(+). The catalysed reaction is a 2-methoxy-6-(all-trans-polyprenyl)benzene-1,4-diol + S-adenosyl-L-methionine = a 5-methoxy-2-methyl-3-(all-trans-polyprenyl)benzene-1,4-diol + S-adenosyl-L-homocysteine + H(+). Its pathway is quinol/quinone metabolism; menaquinone biosynthesis; menaquinol from 1,4-dihydroxy-2-naphthoate: step 2/2. The protein operates within cofactor biosynthesis; ubiquinone biosynthesis. Methyltransferase required for the conversion of demethylmenaquinol (DMKH2) to menaquinol (MKH2) and the conversion of 2-polyprenyl-6-methoxy-1,4-benzoquinol (DDMQH2) to 2-polyprenyl-3-methyl-6-methoxy-1,4-benzoquinol (DMQH2). This chain is Ubiquinone/menaquinone biosynthesis C-methyltransferase UbiE, found in Bradyrhizobium sp. (strain BTAi1 / ATCC BAA-1182).